A 389-amino-acid polypeptide reads, in one-letter code: Large envelope protein (389 aa).

Polar residues-rich tracts occupy residues 1-10 and 85-95; these read MGQNLSTSNP and STNRQTGRQPT. Disordered regions lie at residues 1–54 and 73–106; these read MGQN…AFGL and ILHT…DTHP. A lipid anchor (N-myristoyl glycine; by host) is attached at Gly2. The interval 2–108 is pre-S1; it reads GQNLSTSNPL…PPLRDTHPQA (107 aa). A pre-S region spans residues 2–163; the sequence is GQNLSTSNPL…FSRIGDPVTN (162 aa). The Virion surface; in external conformation portion of the chain corresponds to 2 to 170; that stretch reads GQNLSTSNPL…VTNMENITSG (169 aa). The Intravirion; in internal conformation segment spans residues 2-242; the sequence is GQNLSTSNPL…PGYRWMCLRG (241 aa). The tract at residues 109–163 is pre-S2; sequence VQWNSTTFHQTLQDPRVRGLYFPAGGSSSGTVNPVPTTASPLSSIFSRIGDPVTN. Residues 171–191 traverse the membrane as a helical segment; sequence FLGPLLVLQAGFFLLTRILTI. Residues 192–242 are Intravirion; in external conformation-facing; it reads PQSLDSWWTSLNFRGGTTVCLGQNSQSPTSNHSPTSCPPTCPGYRWMCLRG. A helical transmembrane segment spans residues 243–263; sequence FIIFLFILLLCLIFLLVLLEY. At 264–337 the chain is on the virion surface side; sequence QGMLHVCPLI…WASVRFSWLS (74 aa). N-linked (GlcNAc...) asparagine; by host glycosylation occurs at Asn309. Residues 338 to 358 form a helical membrane-spanning segment; sequence LLVPFVQWFVGLSPTVWLSAI. At 359–364 the chain is on the intravirion side; that stretch reads WMMWYW. A helical transmembrane segment spans residues 365 to 387; that stretch reads GPSLYSILSPFLPLLPIFFCLWV. The Virion surface portion of the chain corresponds to 388–389; it reads YI.

The protein belongs to the orthohepadnavirus major surface antigen family. In terms of assembly, li-HBsAg interacts with capsid protein and with HDV Large delta antigen. Isoform M associates with host chaperone CANX through its pre-S2 N glycan. This association may be essential for M proper secretion. Post-translationally, isoform M is N-terminally acetylated by host at a ratio of 90%, and N-glycosylated by host at the pre-S2 region. Myristoylated.

The protein localises to the virion membrane. Its function is as follows. The large envelope protein exists in two topological conformations, one which is termed 'external' or Le-HBsAg and the other 'internal' or Li-HBsAg. In its external conformation the protein attaches the virus to cell receptors and thereby initiating infection. This interaction determines the species specificity and liver tropism. This attachment induces virion internalization predominantly through caveolin-mediated endocytosis. The large envelope protein also assures fusion between virion membrane and endosomal membrane. In its internal conformation the protein plays a role in virion morphogenesis and mediates the contact with the nucleocapsid like a matrix protein. Functionally, the middle envelope protein plays an important role in the budding of the virion. It is involved in the induction of budding in a nucleocapsid independent way. In this process the majority of envelope proteins bud to form subviral lipoprotein particles of 22 nm of diameter that do not contain a nucleocapsid. The polypeptide is Large envelope protein (Homo sapiens (Human)).